The primary structure comprises 290 residues: Prepilin leader peptidase/N-methyltransferase (290 aa).

A helical transmembrane segment spans residues 14–34 (LYFSLVFLFSLMIGSFLNVVI). Zn(2+) is bound by residues Cys74, Cys77, Cys99, and Cys102. A run of 6 helical transmembrane segments spans residues 106 to 126 (ISAR…AVAM), 130 to 150 (PGWG…LTFI), 161 to 181 (LTLP…FVSL), 185 to 205 (VIGA…FKLL), 232 to 252 (PIVL…LILL), and 261 to 281 (IPFG…GDSI).

Belongs to the peptidase A24 family. Zn(2+) serves as cofactor.

Its subcellular location is the cell inner membrane. It catalyses the reaction Typically cleaves a -Gly-|-Phe- bond to release an N-terminal, basic peptide of 5-8 residues from type IV prepilin, and then N-methylates the new N-terminal amino group, the methyl donor being S-adenosyl-L-methionine.. Functionally, plays an essential role in type IV pili and type II pseudopili formation by proteolytically removing the leader sequence from substrate proteins and subsequently monomethylating the alpha-amino group of the newly exposed N-terminal phenylalanine. The sequence is that of Prepilin leader peptidase/N-methyltransferase (tapD) from Aeromonas hydrophila.